The chain runs to 231 residues: Ribonuclease HII (231 aa).

In terms of domain architecture, RNase H type-2 spans 32-223 (WPVAGMDEAG…FRLGGTEVVE (192 aa)). A divalent metal cation-binding residues include aspartate 38, glutamate 39, and aspartate 130.

Belongs to the RNase HII family. Mn(2+) serves as cofactor. It depends on Mg(2+) as a cofactor.

The protein resides in the cytoplasm. It carries out the reaction Endonucleolytic cleavage to 5'-phosphomonoester.. In terms of biological role, endonuclease that specifically degrades the RNA of RNA-DNA hybrids. This chain is Ribonuclease HII, found in Mesorhizobium japonicum (strain LMG 29417 / CECT 9101 / MAFF 303099) (Mesorhizobium loti (strain MAFF 303099)).